A 428-amino-acid chain; its full sequence is Serine hydroxymethyltransferase (428 aa).

Residues leucine 127 and 131–133 (GHL) each bind (6S)-5,6,7,8-tetrahydrofolate. The residue at position 236 (lysine 236) is an N6-(pyridoxal phosphate)lysine.

This sequence belongs to the SHMT family. In terms of assembly, homodimer. Pyridoxal 5'-phosphate is required as a cofactor.

The protein localises to the cytoplasm. It carries out the reaction (6R)-5,10-methylene-5,6,7,8-tetrahydrofolate + glycine + H2O = (6S)-5,6,7,8-tetrahydrofolate + L-serine. The protein operates within one-carbon metabolism; tetrahydrofolate interconversion. It functions in the pathway amino-acid biosynthesis; glycine biosynthesis; glycine from L-serine: step 1/1. Catalyzes the reversible interconversion of serine and glycine with tetrahydrofolate (THF) serving as the one-carbon carrier. This reaction serves as the major source of one-carbon groups required for the biosynthesis of purines, thymidylate, methionine, and other important biomolecules. Also exhibits THF-independent aldolase activity toward beta-hydroxyamino acids, producing glycine and aldehydes, via a retro-aldol mechanism. The polypeptide is Serine hydroxymethyltransferase (Tropheryma whipplei (strain TW08/27) (Whipple's bacillus)).